We begin with the raw amino-acid sequence, 671 residues long: DNA ligase (671 aa).

Residues 32–36 (DAEYD), 81–82 (SL), and Glu113 each bind NAD(+). Residue Lys115 is the N6-AMP-lysine intermediate of the active site. NAD(+) contacts are provided by Arg136, Glu173, Lys290, and Lys314. The Zn(2+) site is built by Cys408, Cys411, Cys426, and Cys432. Positions 593 to 671 (EIDSPFAGKT…EAEMIRLLGA (79 aa)) constitute a BRCT domain.

This sequence belongs to the NAD-dependent DNA ligase family. LigA subfamily. The cofactor is Mg(2+). Requires Mn(2+) as cofactor.

The enzyme catalyses NAD(+) + (deoxyribonucleotide)n-3'-hydroxyl + 5'-phospho-(deoxyribonucleotide)m = (deoxyribonucleotide)n+m + AMP + beta-nicotinamide D-nucleotide.. Its function is as follows. DNA ligase that catalyzes the formation of phosphodiester linkages between 5'-phosphoryl and 3'-hydroxyl groups in double-stranded DNA using NAD as a coenzyme and as the energy source for the reaction. It is essential for DNA replication and repair of damaged DNA. This is DNA ligase from Salmonella choleraesuis (strain SC-B67).